Consider the following 3515-residue polypeptide: Microtubule-actin cross-linking factor 1, isoforms 6/7 (3515 aa).

7 disordered regions span residues 1 to 23 (MGKP…KGEE), 108 to 136 (VQKS…WKSF), 155 to 196 (VSEA…TLEH), 965 to 1178 (TEED…AVPT), 1217 to 1298 (SPAA…SPAA), 1710 to 1730 (EELA…QFQQ), and 3078 to 3108 (PTHA…ILSQ). Over residues 120-129 (PNAERKDNVN) the composition is skewed to basic and acidic residues. The 13 X 13 AA approximate tandem repeat of P-T-S-P-A-A-A-V-P-T-P-E-E stretch occupies residues 157 to 245 (EAGASNPSLQ…ESEAVATSGN (89 aa)). 2 stretches are compositionally biased toward low complexity: residues 995–1031 (STPE…SPAA) and 1040–1139 (TSPA…AVPT). Repeat copies occupy residues 1012 to 1024 (EPTS…PTPE), 1026 to 1037 (PTSPAAAVPPPE), 1038 to 1051 (EPTS…TPEE), 1052 to 1064 (PTSP…TPEE), 1065 to 1077 (PTSP…TPEE), 1078 to 1090 (PTSP…TPEE), 1091 to 1103 (PTSP…TPEE), 1104 to 1116 (PTSP…TPEE), 1117 to 1129 (PASP…TPEE), 1130 to 1142 (PASP…TPEE), 1143 to 1155 (PAFP…TPEE), 1156 to 1168 (SASA…TPEE), and 1169 to 1178 (SASPAAAVPT). Residues 1140 to 1151 (PEEPAFPAPAVP) are compositionally biased toward pro residues. Composition is skewed to low complexity over residues 1162–1178 (AVPT…AVPT) and 1268–1298 (SSPA…SPAA). Over residues 1715–1730 (SGGQSPTGEQIPQFQQ) the composition is skewed to polar residues. 2 consecutive EF-hand domains span residues 3168–3203 (HKKS…SKFP) and 3204–3239 (TTKL…NKDA). Ca(2+)-binding residues include Asp-3181, Asp-3183, Asp-3185, Lys-3187, Glu-3192, Asp-3217, Asp-3219, Asp-3221, Tyr-3223, and Glu-3228. The 73-residue stretch at 3244–3316 (TDADKIEDEV…EFLVKNDPCR (73 aa)) folds into the GAR domain. Residues 3332–3515 (PEGASQGMTP…ASPRTPGPKR (184 aa)) are disordered. A compositionally biased stretch (low complexity) spans 3352–3386 (SSRAASPTRSSSSASQSNHSCTSMPSSPATPASGT). Positions 3402–3426 (TFHSSRTSLAGDTSNSSSPASTGAK) are enriched in polar residues. Positions 3437–3451 (SRPGSRAGSRAGSRA) are enriched in low complexity. The segment covering 3466–3488 (ETQSACSDTSESSAAGGQGNSRR) has biased composition (polar residues).

It is found in the cytoplasm. Its subcellular location is the cytoskeleton. In Homo sapiens (Human), this protein is Microtubule-actin cross-linking factor 1, isoforms 6/7.